A 1928-amino-acid polypeptide reads, in one-letter code: Lactase/phlorizin hydrolase (1928 aa).

The N-terminal stretch at 1 to 21 (MELPWTALFLSTVLLGLSCQG) is a signal peptide. Residues 22-867 (SDWESDRNFI…LPVRADFTSR (846 aa)) constitute a propeptide, XBetaGly. The Extracellular segment spans residues 22 to 1883 (SDWESDRNFI…LMLGIAEAQT (1862 aa)). A glycosyl hydrolase-1 1; Region I region spans residues 46–289 (NYPPGKQGSD…FIYTLKLEDC (244 aa)). The interval 364–856 (VWAAFANQSR…GFSAKKVKRN (493 aa)) is glycosyl hydrolase-1 2; Region II. N-linked (GlcNAc...) asparagine glycans are attached at residues asparagine 370, asparagine 514, asparagine 824, asparagine 936, asparagine 948, asparagine 991, and asparagine 1037. The tract at residues 904-1367 (RFRDDFLWGV…DLIANNGMPL (464 aa)) is glycosyl hydrolase-1 3; Region III. Phlorizin hydrolase/Glycosylceramidase activity. The active-site Proton donor; for phlorizin hydrolase/Glycosylceramidase activity is glutamate 1067. N-linked (GlcNAc...) asparagine glycans are attached at residues asparagine 1176 and asparagine 1240. Glutamate 1274 serves as the catalytic Nucleophile; for phlorizin hydrolase/Glycosylceramidase activity. Asparagine 1281 and asparagine 1509 each carry an N-linked (GlcNAc...) asparagine glycan. Residues 1374 to 1847 (LYGEFPKGFI…CNGFPDPAQG (474 aa)) are glycosyl hydrolase-1 4; Region IV. Lactase activity. The active-site Proton donor; for lactase activity is the glutamate 1539. Residues asparagine 1657 and asparagine 1684 are each glycosylated (N-linked (GlcNAc...) asparagine). Catalysis depends on glutamate 1750, which acts as the Nucleophile; for lactase activity. 2 N-linked (GlcNAc...) asparagine glycosylation sites follow: asparagine 1762 and asparagine 1815. Residues 1884-1902 (ALYVLFALLLLGACSLAFL) form a helical membrane-spanning segment. The Cytoplasmic portion of the chain corresponds to 1903–1928 (TYNTGRRSKQGNAQPSQHQLSPISSF).

It belongs to the glycosyl hydrolase 1 family. In terms of assembly, homodimer. N-glycosylated. As to expression, intestine.

It is found in the apical cell membrane. It carries out the reaction lactose + H2O = beta-D-galactose + D-glucose. The enzyme catalyses phlorizin + H2O = phloretin + beta-D-glucose. It catalyses the reaction D-cellobiose + H2O = beta-D-glucose + D-glucose. The catalysed reaction is quercetin 4'-O-beta-D-glucoside + H2O = quercetin + beta-D-glucose. It carries out the reaction quercetin 3-O-beta-D-glucoside + H2O = quercetin + beta-D-glucose. The enzyme catalyses kaempferol 3-O-beta-D-glucoside + H2O = kaempferol + beta-D-glucose. It catalyses the reaction luteolin 7-O-beta-D-glucoside + H2O = luteolin + beta-D-glucose. The catalysed reaction is luteolin 4'-O-beta-D-glucoside + H2O = luteolin + beta-D-glucose. It carries out the reaction (2S)-naringenin 7-O-beta-D-glucoside + H2O = (2S)-naringenin + beta-D-glucose. The enzyme catalyses eriodictyol-7-O-beta-D-glucoside + H2O = (S)-eriodictyol + beta-D-glucose. It catalyses the reaction apigenin 7-O-beta-D-glucoside + H2O = apigenin + beta-D-glucose. The catalysed reaction is daidzein 7-O-beta-D-glucoside + H2O = daidzein + beta-D-glucose + H(+). It carries out the reaction genistein 7-O-beta-D-glucoside + H2O = genistein + beta-D-glucose. The enzyme catalyses a beta-D-galactosyl-N-acylsphingosine + H2O = a ceramide + beta-D-galactose.. It catalyses the reaction beta-D-glucosyl-(1&lt;-&gt;1')-N-hexadecanoylsphing-4-enine + H2O = N-hexadecanoylsphing-4-enine + beta-D-glucose. The catalysed reaction is beta-D-galactosyl-(1&lt;-&gt;1')-N-hexadecanoylsphing-4-enine + H2O = beta-D-galactose + N-hexadecanoylsphing-4-enine. It carries out the reaction beta-D-galactosyl-(1&lt;-&gt;1')-N-hexadecanoylsphinganine + H2O = N-hexadecanoylsphinganine + beta-D-galactose. The enzyme catalyses beta-D-glucosyl-(1&lt;-&gt;1')-N-hexadecanoylsphinganine + H2O = N-hexadecanoylsphinganine + beta-D-glucose. Broad specificity glycosidase of the intestinal brush border membrane that hydrolyzes lactose, the main sugar in mammalian milk, to produce D-glucose and D-galactose. The mature protein is composed of two domains that catalyze the hydrolysis of beta-glucopyranosides and beta-galactopyranosides, with a preference for hydrophilic aglycones (in lactose and cellobiose) for one domain and hydrophobic aglycones (in phlorizin and glycosylceramides) for the other. In Rattus norvegicus (Rat), this protein is Lactase/phlorizin hydrolase.